A 151-amino-acid chain; its full sequence is Neuroglobin (151 aa).

The region spanning 1–149 (MERPEQELIR…VVQAMSRGWD (149 aa)) is the Globin domain. His-64 and His-96 together coordinate heme b.

This sequence belongs to the globin family. As to quaternary structure, monomer. Homodimer and homotetramer; disulfide-linked. Mainly monomeric but also detected as part of homodimers and homotetramers. Interacts with 14-3-3 proteins; regulates the phosphorylation of NGB. Could interact (ferrous form) with G-alpha(i) proteins (GTP-bound form). Post-translationally, phosphorylated during hypoxia by ERK1/ERK2. Phosphorylation regulates the heme pocket hexacoordination preventing the association of His-64 with the heme metal center. Thereby, promotes the access of dioxygen and nitrite to the heme and stimulates the nitrite reductase activity. Phosphorylation during hypoxia is stabilized by 14-3-3 proteins.

It is found in the cytoplasm. Its subcellular location is the cytosol. The protein localises to the mitochondrion matrix. The catalysed reaction is Fe(III)-heme b-[protein] + nitric oxide + H2O = Fe(II)-heme b-[protein] + nitrite + 2 H(+). In terms of biological role, monomeric globin with a bis-histidyl six-coordinate heme-iron atom through which it can bind dioxygen, carbon monoxide and nitric oxide. Could help transport oxygen and increase its availability to the metabolically active neuronal tissues, though its low quantity in tissues as well as its high affinity for dioxygen, which may limit its oxygen-releasing ability, argue against it. The ferrous/deoxygenated form exhibits a nitrite reductase activity and it could produce nitric oxide which in turn inhibits cellular respiration in response to hypoxia. In its ferrous/deoxygenated state, it may also exhibit GDI (Guanine nucleotide Dissociation Inhibitor) activity toward heterotrimeric G-alpha proteins, thereby regulating signal transduction to facilitate neuroprotective responses in the wake of hypoxia and associated oxidative stress. This is Neuroglobin from Oryctolagus cuniculus (Rabbit).